Here is an 89-residue protein sequence, read N- to C-terminus: Sec-independent protein translocase protein TatA (89 aa).

Residues 1–21 (MGGISIWQLLIIALIVVLLFG) form a helical membrane-spanning segment. The span at 47–61 (EEKKALEENATDKPA) shows a compositional bias: basic and acidic residues. Residues 47-89 (EEKKALEENATDKPAADTAKVTETAKVAETAEKKAESKGKEQA) are disordered. Positions 62–74 (ADTAKVTETAKVA) are enriched in low complexity. The span at 75-89 (ETAEKKAESKGKEQA) shows a compositional bias: basic and acidic residues.

The protein belongs to the TatA/E family. In terms of assembly, the Tat system comprises two distinct complexes: a TatABC complex, containing multiple copies of TatA, TatB and TatC subunits, and a separate TatA complex, containing only TatA subunits. Substrates initially bind to the TatABC complex, which probably triggers association of the separate TatA complex to form the active translocon.

It is found in the cell inner membrane. Its function is as follows. Part of the twin-arginine translocation (Tat) system that transports large folded proteins containing a characteristic twin-arginine motif in their signal peptide across membranes. TatA could form the protein-conducting channel of the Tat system. The chain is Sec-independent protein translocase protein TatA from Shewanella pealeana (strain ATCC 700345 / ANG-SQ1).